The sequence spans 150 residues: MSDKFHILLLNGPNLNLLGTREPEKYGYTTLTEIVSQLEAQAQGMDVVLSHLQSNAEHVLIDRIHQARGNTDFILINPAAFTHTSVALRDALLGVQIPFIEIHLSNVHAREPFRHHSYLSDIAVGVICGLGADGYNFALQAAVNRLSKSN.

The active-site Proton acceptor is the Tyr-26. 3 residues coordinate substrate: Asn-77, His-83, and Asp-90. Residue His-103 is the Proton donor of the active site. Residues 104-105 (LS) and Arg-114 contribute to the substrate site.

This sequence belongs to the type-II 3-dehydroquinase family. Homododecamer.

It carries out the reaction 3-dehydroquinate = 3-dehydroshikimate + H2O. It functions in the pathway metabolic intermediate biosynthesis; chorismate biosynthesis; chorismate from D-erythrose 4-phosphate and phosphoenolpyruvate: step 3/7. Functionally, catalyzes a trans-dehydration via an enolate intermediate. This Yersinia enterocolitica serotype O:8 / biotype 1B (strain NCTC 13174 / 8081) protein is 3-dehydroquinate dehydratase.